Here is a 916-residue protein sequence, read N- to C-terminus: Rab3 GTPase-activating protein catalytic subunit (916 aa).

The disordered stretch occupies residues 530–574 (NSKRKSEGMVGKASSEEEEDEDDDEGEFFDCDDLTAGAGSPTKAV). Phosphoserine occurs at positions 543 and 544. The span at 545–562 (EEEEDEDDDEGEFFDCDD) shows a compositional bias: acidic residues.

This sequence belongs to the Rab3-GAP catalytic subunit family. In terms of assembly, the Rab3 GTPase-activating complex is a heterodimer composed of Rab3GAP1 and Rab3-GAP.

It localises to the cytoplasm. Functionally, catalytic subunit of the Rab3 GTPase-activating (Rab3GAP) complex composed of Rab3-GAP and Rab3GAP1, which has both GTPase-activating protein (GAP) activity towards Rab3, and guanine nucleotide exchange factor (GEF) activity towards Rab18. As part of the Rab3GAP complex, required for the rapid induction and sustained expression of synaptic homeostasis at the neuromuscular junction (NMJ). Also participates in the regulation of autophagy in tissues such as larval fat cells and adult muscles. The Rab3GAP complex, acts as a GAP for Rab3 by converting active Rab3-GTP to the inactive form Rab3-GDP. At the neuromuscular junction (NMJ), forms a presynaptic signaling mechanism with Rab3 that regulates progression of synaptic homeostasis at a late stage of vesicle release. Within this mechanism Rab3-GTP acts, directly or indirectly, to inhibit the progression of synaptic homeostasis, and Rab3-GAP functions to inactivate this action of Rab3-GTP. The Rab3GAP complex, acts as a GEF for Rab18 by promoting the conversion of inactive Rab18-GDP to the active form Rab18-GTP. Regulates autophagy as part of a Rab3GAP-Rab18 module. Once Rab18 is activated by the GEF Rab3GAP complex, the Rab3GAP-Rab18 module localizes to autophagosomes, and regulates autolysosome formation and maturation together with the Rab18 interacting effector, the PI3K/Vps34 Complex I. This is Rab3 GTPase-activating protein catalytic subunit from Drosophila melanogaster (Fruit fly).